The chain runs to 495 residues: ATP synthase subunit beta, chloroplastic (495 aa).

Residue 172-179 (GGAGVGKT) coordinates ATP.

The protein belongs to the ATPase alpha/beta chains family. F-type ATPases have 2 components, CF(1) - the catalytic core - and CF(0) - the membrane proton channel. CF(1) has five subunits: alpha(3), beta(3), gamma(1), delta(1), epsilon(1). CF(0) has four main subunits: a(1), b(1), b'(1) and c(9-12).

The protein localises to the plastid. The protein resides in the chloroplast thylakoid membrane. The catalysed reaction is ATP + H2O + 4 H(+)(in) = ADP + phosphate + 5 H(+)(out). Its function is as follows. Produces ATP from ADP in the presence of a proton gradient across the membrane. The catalytic sites are hosted primarily by the beta subunits. This is ATP synthase subunit beta, chloroplastic from Brimeura amethystina (Spanish hyacinth).